The sequence spans 196 residues: MSQTALILLQRVEHLGQMGDLVHVKPGYARNFLLPQAKAMRATAANKKRFETERAQLEAQNLKKREEAERLAERMHELSVVIIRQAGDSGSLYGSVSTRDIAAAATEAGLTISRQQVVLAHPIKQLGLTEARIVLHPEVSIPLTVNVARSAEEAERQARGEAIGVQDEDENILGELQAENAAEEAAAEAAEASEEA.

The protein belongs to the bacterial ribosomal protein bL9 family.

Binds to the 23S rRNA. In Gluconobacter oxydans (strain 621H) (Gluconobacter suboxydans), this protein is Large ribosomal subunit protein bL9.